The chain runs to 179 residues: Alpha-S2-casein-like A (179 aa).

The first 15 residues, 1 to 15 (MKFFIFTCLVAAALA), serve as a signal peptide directing secretion. Phosphoserine occurs at positions 24 and 25. The disordered stretch occupies residues 44 to 121 (FQTPQDSASS…NAIYDVPSQE (78 aa)). Positions 63–74 (ISEKIEQSEEQK) are enriched in basic and acidic residues. The segment covering 93-110 (PQICTPYQQQSSVNQRPQ) has biased composition (polar residues).

The protein belongs to the alpha-casein family. Mammary gland specific. Secreted in milk.

It is found in the secreted. Functionally, important role in the capacity of milk to transport calcium phosphate. This chain is Alpha-S2-casein-like A (Csn1s2a), found in Rattus norvegicus (Rat).